The chain runs to 496 residues: Aspartyl/glutamyl-tRNA(Asn/Gln) amidotransferase subunit B (496 aa).

Residues Thr475–Lys496 are disordered.

Belongs to the GatB/GatE family. GatB subfamily. Heterotrimer of A, B and C subunits.

It carries out the reaction L-glutamyl-tRNA(Gln) + L-glutamine + ATP + H2O = L-glutaminyl-tRNA(Gln) + L-glutamate + ADP + phosphate + H(+). It catalyses the reaction L-aspartyl-tRNA(Asn) + L-glutamine + ATP + H2O = L-asparaginyl-tRNA(Asn) + L-glutamate + ADP + phosphate + 2 H(+). Allows the formation of correctly charged Asn-tRNA(Asn) or Gln-tRNA(Gln) through the transamidation of misacylated Asp-tRNA(Asn) or Glu-tRNA(Gln) in organisms which lack either or both of asparaginyl-tRNA or glutaminyl-tRNA synthetases. The reaction takes place in the presence of glutamine and ATP through an activated phospho-Asp-tRNA(Asn) or phospho-Glu-tRNA(Gln). The protein is Aspartyl/glutamyl-tRNA(Asn/Gln) amidotransferase subunit B of Haloquadratum walsbyi (strain DSM 16790 / HBSQ001).